Here is a 143-residue protein sequence, read N- to C-terminus: Large ribosomal subunit protein uL11 (143 aa).

The protein belongs to the universal ribosomal protein uL11 family. As to quaternary structure, part of the ribosomal stalk of the 50S ribosomal subunit. Interacts with L10 and the large rRNA to form the base of the stalk. L10 forms an elongated spine to which L12 dimers bind in a sequential fashion forming a multimeric L10(L12)X complex. Post-translationally, one or more lysine residues are methylated.

Functionally, forms part of the ribosomal stalk which helps the ribosome interact with GTP-bound translation factors. This Burkholderia cenocepacia (strain HI2424) protein is Large ribosomal subunit protein uL11.